The following is a 448-amino-acid chain: Phosphoglucosamine mutase (448 aa).

S102 functions as the Phosphoserine intermediate in the catalytic mechanism. Mg(2+) is bound by residues S102, D243, D245, and D247. S102 is subject to Phosphoserine.

It belongs to the phosphohexose mutase family. Mg(2+) is required as a cofactor. Activated by phosphorylation.

The catalysed reaction is alpha-D-glucosamine 1-phosphate = D-glucosamine 6-phosphate. Functionally, catalyzes the conversion of glucosamine-6-phosphate to glucosamine-1-phosphate. This is Phosphoglucosamine mutase from Parvibaculum lavamentivorans (strain DS-1 / DSM 13023 / NCIMB 13966).